A 136-amino-acid chain; its full sequence is MGFLKFSPFLVVSILLLYQACGLQAVPLRSTLESSPGMATLSEEEARLLAALVQNYMQMKVRELEQEEEQEAEGSSLDSPRSKRCGNLSTCMLGTYTQDLNKFHTFPQTSIGVGAPGKKRDMAKDLETNHHPYFGN.

Residues 1 to 25 (MGFLKFSPFLVVSILLLYQACGLQA) form the signal peptide. The propeptide occupies 26–82 (VPLRSTLESSPGMATLSEEEARLLAALVQNYMQMKVRELEQEEEQEAEGSSLDSPRS). A Phosphoserine modification is found at S42. The interval 64 to 84 (LEQEEEQEAEGSSLDSPRSKR) is disordered. C85 and C91 are joined by a disulfide. N-linked (GlcNAc...) asparagine glycosylation occurs at N87. A disordered region spans residues 114–136 (GAPGKKRDMAKDLETNHHPYFGN). The residue at position 116 (P116) is a Proline amide. Over residues 118-130 (KKRDMAKDLETNH) the composition is skewed to basic and acidic residues. Positions 121–136 (DMAKDLETNHHPYFGN) are excised as a propeptide.

Belongs to the calcitonin family.

It localises to the secreted. Functionally, calcitonin is a peptide hormone that causes a rapid but short-lived drop in the level of calcium and phosphate in blood by promoting the incorporation of those ions in the bones. Calcitonin function is mediated by the calcitonin receptor/CALCR and the CALCR-RAMP2 (AMYR2) receptor complex. In Rattus norvegicus (Rat), this protein is Calcitonin.